Here is a 541-residue protein sequence, read N- to C-terminus: Neutral amino acid transporter B(0) (541 aa).

Position 1 is an N-acetylmethionine (methionine 1). Topologically, residues 1–51 (MVADPPRDSKGLAAAEPTANGGLALASIEDQGAAAGGYCGSRDQVRRCLRA) are cytoplasmic. A helical membrane pass occupies residues 52–81 (NLLVLLTVVAVVAGVALGLGVSGAGGALAL). Residues 82–94 (GPERLSAFVFPGE) lie on the Extracellular side of the membrane. The helical transmembrane segment at 95 to 116 (LLLRLLRMIILPLVVCSLIGGA) threads the bilayer. At 117-130 (ASLDPGALGRLGAW) the chain is on the cytoplasmic side. Residues 131–153 (ALLFFLVTTLLASALGVGLALAL) form a helical membrane-spanning segment. Residues 154–224 (QPGAASAAIN…GTRVKVPVGQ (71 aa)) lie on the Extracellular side of the membrane. Asparagine 163 and asparagine 212 each carry an N-linked (GlcNAc...) asparagine glycan. Residues 225-248 (EVEGMNILGLVVFAIVFGVALRKL) traverse the membrane as a helical segment. Residues 249–257 (GPEGELLIR) lie on the Cytoplasmic side of the membrane. Residues 258–285 (FFNSFNEATMVLVSWIMWYAPVGIMFLV) form a helical membrane-spanning segment. Topologically, residues 286-306 (AGKIVEMEDVGLLFARLGKYI) are extracellular. The chain crosses the membrane as a helical span at residues 307 to 328 (LCCLLGHAIHGLLVLPLIYFLF). At 329–333 (TRKNP) the chain is on the cytoplasmic side. The segment at residues 334 to 364 (YRFLWGIVTPLATAFGTSSSSATLPLMMKCV) is an intramembrane region (discontinuously helical). At 365–373 (EENNGVAKH) the chain is on the cytoplasmic side. The chain crosses the membrane as a helical span at residues 374 to 400 (ISRFILPIGATVNMDGAALFQCVAAVF). Residues glycine 382, threonine 384, and asparagine 386 each coordinate Na(+). At 401 to 413 (IAQLSQQSLDFVK) the chain is on the extracellular side. Residues 414–447 (IITILVTATASSVGAAGIPAGGVLTLAIILEAVN) constitute an intramembrane region (discontinuously helical). The Extracellular segment spans residues 448-460 (LPVDHISLILAVD). The chain crosses the membrane as a helical span at residues 461-482 (WLVDRSCTVLNVEGDALGAGLL). Na(+)-binding residues include asparagine 471 and aspartate 475. At 483–541 (QNYVDRTESRSTEPELIQVKSELPLDPLPVPTEEGNPLLKHYRGPAGDATVASEKESVM) the chain is on the cytoplasmic side. Serine 493 is modified (phosphoserine). Threonine 494 is subject to Phosphothreonine. Serine 503, serine 535, and serine 539 each carry phosphoserine. The tract at residues 511–541 (PVPTEEGNPLLKHYRGPAGDATVASEKESVM) is disordered.

This sequence belongs to the dicarboxylate/amino acid:cation symporter (DAACS) (TC 2.A.23) family. SLC1A5 subfamily. Homotrimer. Interacts with ERVH48-1/suppressyn; may negatively regulate syncytialization. In terms of tissue distribution, placenta, lung, skeletal muscle, kidney, pancreas, and intestine. Expressed in CD34-positive hematopoietic progenitors (at protein level).

It localises to the cell membrane. Its subcellular location is the melanosome. It catalyses the reaction L-glutamine(out) + L-serine(in) + Na(+)(out) = L-glutamine(in) + L-serine(out) + Na(+)(in). The catalysed reaction is L-glutamine(in) + L-serine(out) + Na(+)(out) = L-glutamine(out) + L-serine(in) + Na(+)(in). It carries out the reaction L-threonine(in) + L-glutamine(out) + Na(+)(out) = L-threonine(out) + L-glutamine(in) + Na(+)(in). The enzyme catalyses L-threonine(out) + L-glutamine(in) + Na(+)(out) = L-threonine(in) + L-glutamine(out) + Na(+)(in). It catalyses the reaction L-asparagine(in) + L-glutamine(out) + Na(+)(out) = L-asparagine(out) + L-glutamine(in) + Na(+)(in). The catalysed reaction is L-asparagine(out) + L-glutamine(in) + Na(+)(out) = L-asparagine(in) + L-glutamine(out) + Na(+)(in). It carries out the reaction L-glutamine(in) + L-alanine(out) + Na(+)(out) = L-glutamine(out) + L-alanine(in) + Na(+)(in). The enzyme catalyses L-valine(out) + L-glutamine(in) + Na(+)(out) = L-valine(in) + L-glutamine(out) + Na(+)(in). It catalyses the reaction L-glutamine(in) + L-methionine(out) + Na(+)(out) = L-glutamine(out) + L-methionine(in) + Na(+)(in). The catalysed reaction is L-glutamine(in) + L-glutamate(out) + Na(+)(out) + H(+)(out) = L-glutamine(out) + L-glutamate(in) + Na(+)(in) + H(+)(in). It carries out the reaction D-serine(in) + L-glutamine(out) + Na(+)(out) = D-serine(out) + L-glutamine(in) + Na(+)(in). The enzyme catalyses D-serine(in) + L-alanine(out) + Na(+)(out) = D-serine(out) + L-alanine(in) + Na(+)(in). It catalyses the reaction nitrate(in) = nitrate(out). The catalysed reaction is iodide(out) = iodide(in). It carries out the reaction thiocyanate(in) = thiocyanate(out). Regulated by L-cysteine, which can either inhibit substrate influx or trigger substrate efflux without being transported itself. Functionally, sodium-coupled antiporter of neutral amino acids. In a tri-substrate transport cycle, exchanges neutral amino acids between the extracellular and intracellular compartments, coupled to the inward cotransport of at least one sodium ion. The preferred substrate is the essential amino acid L-glutamine, a precursor for biosynthesis of proteins, nucleotides and amine sugars as well as an alternative fuel for mitochondrial oxidative phosphorylation. Exchanges L-glutamine with other neutral amino acids such as L-serine, L-threonine and L-asparagine in a bidirectional way. Provides L-glutamine to proliferating stem and activated cells driving the metabolic switch toward cell differentiation. The transport cycle is usually pH-independent, with the exception of L-glutamate. Transports extracellular L-glutamate coupled to the cotransport of one proton and one sodium ion in exchange for intracellular L-glutamine counter-ion. May provide for L-glutamate uptake in glial cells regulating glutamine/glutamate cycle in the nervous system. Can transport D-amino acids. Mediates D-serine release from the retinal glia potentially affecting NMDA receptor function in retinal neurons. Displays sodium- and amino acid-dependent but uncoupled channel-like anion conductance with a preference SCN(-) &gt;&gt; NO3(-) &gt; I(-) &gt; Cl(-). Through binding of the fusogenic protein syncytin-1/ERVW-1 may mediate trophoblasts syncytialization, the spontaneous fusion of their plasma membranes, an essential process in placental development. Its function is as follows. (Microbial infection) Acts as a cell surface receptor for Feline endogenous virus RD114. In terms of biological role, (Microbial infection) Acts as a cell surface receptor for Baboon M7 endogenous virus. (Microbial infection) Acts as a cell surface receptor for type D simian retroviruses. The protein is Neutral amino acid transporter B(0) of Homo sapiens (Human).